A 341-amino-acid polypeptide reads, in one-letter code: MKVSDFYFELPEELIAQYPLEKRDSSRLMVLDKKTGEIEHRKFHDILEYLNEGDTLVLNNTRVLPARLIGEKEETGGKIEFLLLKRIEGDKWECLAKPGRKAKVGTVFTFGEGKLKAIVREIGEEGNRIIEFKYDGIFEQVLDELGQMPLPPYIHEKLEDKERYQTVYSKEKGSAAAPTAGLHFTEELLKEIKDKGVNIAYLTLHVGLGTFRPVKVDDVNNHVMHSEYYHLDKENAELINKTKEAGKRVIAVGTTSSRTLETIGDENGRVREQSGWTDIFIYPGYKFKIVDNLITNFHLPESTLIMLVSALAGQDNIMNAYNTAVKEKYRFFSFGDSMFIK.

The protein belongs to the QueA family. As to quaternary structure, monomer.

It localises to the cytoplasm. It carries out the reaction 7-aminomethyl-7-carbaguanosine(34) in tRNA + S-adenosyl-L-methionine = epoxyqueuosine(34) in tRNA + adenine + L-methionine + 2 H(+). It participates in tRNA modification; tRNA-queuosine biosynthesis. Its function is as follows. Transfers and isomerizes the ribose moiety from AdoMet to the 7-aminomethyl group of 7-deazaguanine (preQ1-tRNA) to give epoxyqueuosine (oQ-tRNA). The sequence is that of S-adenosylmethionine:tRNA ribosyltransferase-isomerase from Clostridium perfringens (strain ATCC 13124 / DSM 756 / JCM 1290 / NCIMB 6125 / NCTC 8237 / Type A).